Reading from the N-terminus, the 318-residue chain is MGSTSRVRGTGVNRHLLSTEDLDRDDALLVLDTAERMARVAEASVRKLPTLRGRTVVNLFFEDSTRTRTSFEVAAKRLSADVINFSARGSSVSKGESLKDTAQTLEAMGADAVVCRHAASGAPHRLASWVRGSVVNAGDGTHEHPTQALLDAFTMRRRLGRIDGLAVTIVGDVLHSRVARSNVWLLATLGATVTVVAPPTLVPLGISSWPVEVSYNLDAVLPKSDVVMMLRVQRERMSAAFFPTEREYSRRYGLDADRAEMLPDHALVMHPGPMVRGMEIASRVADSARSTVVEQVANGVSVRMAVLYLLLGGSGEVS.

Carbamoyl phosphate is bound by residues arginine 66 and threonine 67. Lysine 94 serves as a coordination point for L-aspartate. Carbamoyl phosphate contacts are provided by arginine 116, histidine 144, and glutamine 147. The L-aspartate site is built by arginine 177 and arginine 231. Carbamoyl phosphate is bound by residues glycine 272 and proline 273.

This sequence belongs to the aspartate/ornithine carbamoyltransferase superfamily. ATCase family. In terms of assembly, heterododecamer (2C3:3R2) of six catalytic PyrB chains organized as two trimers (C3), and six regulatory PyrI chains organized as three dimers (R2).

The catalysed reaction is carbamoyl phosphate + L-aspartate = N-carbamoyl-L-aspartate + phosphate + H(+). It participates in pyrimidine metabolism; UMP biosynthesis via de novo pathway; (S)-dihydroorotate from bicarbonate: step 2/3. In terms of biological role, catalyzes the condensation of carbamoyl phosphate and aspartate to form carbamoyl aspartate and inorganic phosphate, the committed step in the de novo pyrimidine nucleotide biosynthesis pathway. This chain is Aspartate carbamoyltransferase catalytic subunit, found in Frankia casuarinae (strain DSM 45818 / CECT 9043 / HFP020203 / CcI3).